The chain runs to 469 residues: Adenosylhomocysteinase (469 aa).

Substrate contacts are provided by threonine 63, aspartate 139, and glutamate 164. 165-167 (TTT) contributes to the NAD(+) binding site. Residues lysine 194 and aspartate 198 each coordinate substrate. NAD(+)-binding positions include asparagine 199, 228-233 (GYGDVG), glutamate 251, asparagine 300, 321-323 (IGH), and asparagine 375.

This sequence belongs to the adenosylhomocysteinase family. It depends on NAD(+) as a cofactor.

The protein localises to the cytoplasm. It catalyses the reaction S-adenosyl-L-homocysteine + H2O = L-homocysteine + adenosine. It participates in amino-acid biosynthesis; L-homocysteine biosynthesis; L-homocysteine from S-adenosyl-L-homocysteine: step 1/1. May play a key role in the regulation of the intracellular concentration of adenosylhomocysteine. The chain is Adenosylhomocysteinase from Pseudomonas syringae pv. tomato (strain ATCC BAA-871 / DC3000).